The following is a 367-amino-acid chain: tRNA-specific 2-thiouridylase MnmA (367 aa).

ATP-binding positions include 11–18 (AMSGGVDS) and Met-37. Positions 97–99 (NPD) are interaction with target base in tRNA. Cys-102 acts as the Nucleophile in catalysis. Cysteines 102 and 199 form a disulfide. ATP is bound at residue Gly-127. An interaction with tRNA region spans residues 149–151 (KDQ). Residue Cys-199 is the Cysteine persulfide intermediate of the active site. Residues 311–312 (RY) are interaction with tRNA.

This sequence belongs to the MnmA/TRMU family. In terms of assembly, interacts with TusE.

The protein resides in the cytoplasm. It catalyses the reaction S-sulfanyl-L-cysteinyl-[protein] + uridine(34) in tRNA + AH2 + ATP = 2-thiouridine(34) in tRNA + L-cysteinyl-[protein] + A + AMP + diphosphate + H(+). Its function is as follows. Catalyzes the 2-thiolation of uridine at the wobble position (U34) of tRNA(Lys), tRNA(Glu) and tRNA(Gln), leading to the formation of s(2)U34, the first step of tRNA-mnm(5)s(2)U34 synthesis. Sulfur is provided by IscS, via a sulfur-relay system. Binds ATP and its substrate tRNAs. The chain is tRNA-specific 2-thiouridylase MnmA from Buchnera aphidicola subsp. Schizaphis graminum (strain Sg).